The primary structure comprises 236 residues: 2-C-methyl-D-erythritol 4-phosphate cytidylyltransferase (236 aa).

It belongs to the IspD/TarI cytidylyltransferase family. IspD subfamily.

It carries out the reaction 2-C-methyl-D-erythritol 4-phosphate + CTP + H(+) = 4-CDP-2-C-methyl-D-erythritol + diphosphate. It functions in the pathway isoprenoid biosynthesis; isopentenyl diphosphate biosynthesis via DXP pathway; isopentenyl diphosphate from 1-deoxy-D-xylulose 5-phosphate: step 2/6. In terms of biological role, catalyzes the formation of 4-diphosphocytidyl-2-C-methyl-D-erythritol from CTP and 2-C-methyl-D-erythritol 4-phosphate (MEP). The polypeptide is 2-C-methyl-D-erythritol 4-phosphate cytidylyltransferase (Pseudomonas syringae pv. syringae (strain B728a)).